The chain runs to 297 residues: Homoserine kinase (297 aa).

82–92 (PLTRGLGSSAS) is an ATP binding site.

This sequence belongs to the GHMP kinase family. Homoserine kinase subfamily.

It localises to the cytoplasm. It catalyses the reaction L-homoserine + ATP = O-phospho-L-homoserine + ADP + H(+). It participates in amino-acid biosynthesis; L-threonine biosynthesis; L-threonine from L-aspartate: step 4/5. Catalyzes the ATP-dependent phosphorylation of L-homoserine to L-homoserine phosphate. The chain is Homoserine kinase from Bacillus cereus (strain G9842).